The following is a 406-amino-acid chain: Phosphopentomutase (406 aa).

Residues Asp-10, Asp-305, His-310, Asp-346, His-347, and His-358 each contribute to the Mn(2+) site.

It belongs to the phosphopentomutase family. It depends on Mn(2+) as a cofactor.

The protein localises to the cytoplasm. The catalysed reaction is 2-deoxy-alpha-D-ribose 1-phosphate = 2-deoxy-D-ribose 5-phosphate. The enzyme catalyses alpha-D-ribose 1-phosphate = D-ribose 5-phosphate. The protein operates within carbohydrate degradation; 2-deoxy-D-ribose 1-phosphate degradation; D-glyceraldehyde 3-phosphate and acetaldehyde from 2-deoxy-alpha-D-ribose 1-phosphate: step 1/2. Functionally, isomerase that catalyzes the conversion of deoxy-ribose 1-phosphate (dRib-1-P) and ribose 1-phosphate (Rib-1-P) to deoxy-ribose 5-phosphate (dRib-5-P) and ribose 5-phosphate (Rib-5-P), respectively. The polypeptide is Phosphopentomutase (Rhizobium etli (strain ATCC 51251 / DSM 11541 / JCM 21823 / NBRC 15573 / CFN 42)).